Here is a 180-residue protein sequence, read N- to C-terminus: ATP-dependent protease subunit HslV (180 aa).

The active site involves Thr-7. Gly-165, Cys-168, and Thr-171 together coordinate Na(+).

It belongs to the peptidase T1B family. HslV subfamily. A double ring-shaped homohexamer of HslV is capped on each side by a ring-shaped HslU homohexamer. The assembly of the HslU/HslV complex is dependent on binding of ATP.

It localises to the cytoplasm. It catalyses the reaction ATP-dependent cleavage of peptide bonds with broad specificity.. Its activity is regulated as follows. Allosterically activated by HslU binding. Protease subunit of a proteasome-like degradation complex believed to be a general protein degrading machinery. This is ATP-dependent protease subunit HslV from Bacillus cereus (strain ATCC 10987 / NRS 248).